The primary structure comprises 527 residues: Phosphoenolpyruvate carboxykinase (ATP) (527 aa).

Substrate-binding residues include Arg-56, Tyr-191, and Lys-197. Residues Lys-197, His-216, and 232-240 (GLSGTGKTT) contribute to the ATP site. Positions 197 and 216 each coordinate Mn(2+). Asp-253 is a binding site for Mn(2+). ATP contacts are provided by residues Glu-281, Arg-318, 437–438 (RI), and Thr-443. Arg-318 serves as a coordination point for substrate.

Belongs to the phosphoenolpyruvate carboxykinase (ATP) family. Mn(2+) is required as a cofactor.

It localises to the cytoplasm. It catalyses the reaction oxaloacetate + ATP = phosphoenolpyruvate + ADP + CO2. It participates in carbohydrate biosynthesis; gluconeogenesis. In terms of biological role, involved in the gluconeogenesis. Catalyzes the conversion of oxaloacetate (OAA) to phosphoenolpyruvate (PEP) through direct phosphoryl transfer between the nucleoside triphosphate and OAA. The protein is Phosphoenolpyruvate carboxykinase (ATP) of Shouchella clausii (strain KSM-K16) (Alkalihalobacillus clausii).